Here is a 370-residue protein sequence, read N- to C-terminus: Phosphoserine aminotransferase (370 aa).

At Met-1 the chain carries N-acetylmethionine. O-phospho-L-serine-binding residues include His-44 and Arg-45. Position 51 is an N6-acetyllysine (Lys-51). Pyridoxal 5'-phosphate contacts are provided by Gly-79, Cys-80, and Trp-107. N6-acetyllysine is present on Lys-127. 3 residues coordinate pyridoxal 5'-phosphate: Thr-156, Asp-176, and Gln-199. An N6-(pyridoxal phosphate)lysine modification is found at Lys-200. Residues Asn-241 and Thr-242 each coordinate pyridoxal 5'-phosphate. 3 positions are modified to N6-acetyllysine: Lys-269, Lys-318, and Lys-323. Position 331 is a phosphoserine (Ser-331). The residue at position 333 (Lys-333) is an N6-acetyllysine. O-phospho-L-serine-binding residues include His-335, Arg-336, and Arg-342.

It belongs to the class-V pyridoxal-phosphate-dependent aminotransferase family. SerC subfamily. As to quaternary structure, homodimer. Pyridoxal 5'-phosphate is required as a cofactor.

The enzyme catalyses O-phospho-L-serine + 2-oxoglutarate = 3-phosphooxypyruvate + L-glutamate. It functions in the pathway amino-acid biosynthesis; L-serine biosynthesis; L-serine from 3-phospho-D-glycerate: step 2/3. Involved in L-serine biosynthesis via the phosphorylated pathway, a three-step pathway converting the glycolytic intermediate 3-phospho-D-glycerate into L-serine. Catalyzes the second step, that is the pyridoxal 5'-phosphate-dependent transamination of 3-phosphohydroxypyruvate and L-glutamate to O-phosphoserine (OPS) and alpha-ketoglutarate. In Oryctolagus cuniculus (Rabbit), this protein is Phosphoserine aminotransferase (PSAT1).